We begin with the raw amino-acid sequence, 320 residues long: Olfactory receptor 12D1 (320 aa).

Over 1-23 the chain is Extracellular; the sequence is MLNTTSVTEFLLLGVTDIQELQP. The N-linked (GlcNAc...) asparagine glycan is linked to Asn3. The chain crosses the membrane as a helical span at residues 24 to 44; sequence FLFVVFLTIYFISVAGNGAIL. At 45–55 the chain is on the cytoplasmic side; it reads MIVISDPRLHS. A helical transmembrane segment spans residues 56–76; the sequence is PMYFFLGNLSCLDICYSSVTL. Over 77-97 the chain is Extracellular; sequence PKMLQNFLSAHKAISFLGCIS. A disulfide bond links Cys95 and Cys177. Residues 98–118 traverse the membrane as a helical segment; that stretch reads QLHFFHFLGSTEAMLLAVMAF. At 119-141 the chain is on the cytoplasmic side; sequence DRFVAICKPLRYTVIMNPQLCTQ. The chain crosses the membrane as a helical span at residues 142 to 162; it reads MAITIWMIGFFHALLHSLMTS. Residues 163–203 lie on the Extracellular side of the membrane; sequence RLNFCGSNRIYHFFCDVKPLLKLACGNTELNQWLLSTVTGT. A helical transmembrane segment spans residues 204–224; sequence IAMGPFFLTLLSYFYIITHLF. Residues 225-238 are Cytoplasmic-facing; that stretch reads FKTHSFSMLRKALS. Residues 239–259 form a helical membrane-spanning segment; that stretch reads TCASHFMVVILLYAPVLFTYI. Over 260–270 the chain is Extracellular; sequence HHASGTSMDQD. The chain crosses the membrane as a helical span at residues 271–291; that stretch reads RITAIMYTVVTPVLNPLIYTL. Residues 292–320 lie on the Cytoplasmic side of the membrane; sequence RNKEVKGAFNRAMKRWLWPKEILKNSSEA.

It belongs to the G-protein coupled receptor 1 family.

It is found in the cell membrane. In terms of biological role, odorant receptor. The chain is Olfactory receptor 12D1 (OR12D1) from Homo sapiens (Human).